A 116-amino-acid polypeptide reads, in one-letter code: Guanylin (116 aa).

Residues 1-23 (MNACVLSVLCLLGALAVLVEGVT) form the signal peptide. The propeptide occupies 24 to 101 (VQDGDLSFPL…LQRLEAIAQD (78 aa)). Disulfide bonds link C69-C83, C105-C113, and C108-C116.

Belongs to the guanylin family. Localized in both crypts and villi in the small intestine and to superficial epithelial cells in the colon.

It is found in the secreted. Its function is as follows. Endogenous activator of intestinal guanylate cyclase. It stimulates this enzyme through the same receptor binding region as the heat-stable enterotoxins. This Mus musculus (Mouse) protein is Guanylin (Guca2a).